The following is a 92-amino-acid chain: Small ribosomal subunit protein uS19c (92 aa).

The protein belongs to the universal ribosomal protein uS19 family. Component of the chloroplast small ribosomal subunit (SSU). Mature 70S chloroplast ribosomes of higher plants consist of a small (30S) and a large (50S) subunit. The 30S small subunit contains 1 molecule of ribosomal RNA (16S rRNA) and 24 different proteins. The 50S large subunit contains 3 rRNA molecules (23S, 5S and 4.5S rRNA) and 33 different proteins. uS19c binds directly to 16S ribosomal RNA.

It localises to the plastid. The protein localises to the chloroplast. Its function is as follows. Component of the chloroplast ribosome (chloro-ribosome), a dedicated translation machinery responsible for the synthesis of chloroplast genome-encoded proteins, including proteins of the transcription and translation machinery and components of the photosynthetic apparatus. This Spinacia oleracea (Spinach) protein is Small ribosomal subunit protein uS19c (rps19).